The chain runs to 435 residues: Aspartate aminotransferase (435 aa).

Pyridoxal 5'-phosphate-binding positions include Y69 and 100–101; that span reads SL. 139 to 141 serves as a coordination point for substrate; that stretch reads YDR. Pyridoxal 5'-phosphate contacts are provided by residues N189, Y221, and 254-256; that span reads STS. R392 serves as a coordination point for substrate.

The protein belongs to the class-I pyridoxal-phosphate-dependent aminotransferase family. It depends on pyridoxal 5'-phosphate as a cofactor.

It catalyses the reaction L-aspartate + 2-oxoglutarate = oxaloacetate + L-glutamate. Main aspartate aminotransferase that couples nitrogen assimilation to aspartate synthesis. Has a weak, but significant, side activity toward kynurenine (Kyn). Oxaloacetate and 2-oxoglutarate, but not pyruvate, serve as amino acceptors, while Asp, Glu and Kyn serve as the best amino donors. Essential for axenic growth and survival of M.tuberculosis in macrophages and in mice. The sequence is that of Aspartate aminotransferase from Mycobacterium tuberculosis (strain ATCC 25618 / H37Rv).